Consider the following 306-residue polypeptide: Putative F-box protein At1g47300 (306 aa).

In terms of domain architecture, F-box spans 1–45; it reads MISDSIPKELILEIMLRLPAKSIARFHCVSKQWASMLSRPYFTEL. A disordered region spans residues 235 to 278; the sequence is DPKLLESKEEEEEEEEEEEEEEEEEEEEEEEEEEEESKEREKEK. The span at 242-270 shows a compositional bias: acidic residues; sequence KEEEEEEEEEEEEEEEEEEEEEEEEEEEE.

This chain is Putative F-box protein At1g47300, found in Arabidopsis thaliana (Mouse-ear cress).